A 355-amino-acid chain; its full sequence is Peptide chain release factor 1 (355 aa).

The residue at position 231 (Q231) is an N5-methylglutamine. Residues 280–291 (SERLAKESEARK) are compositionally biased toward basic and acidic residues. Residues 280–303 (SERLAKESEARKSQVGSGDRSERI) are disordered.

It belongs to the prokaryotic/mitochondrial release factor family. In terms of processing, methylated by PrmC. Methylation increases the termination efficiency of RF1.

It is found in the cytoplasm. Its function is as follows. Peptide chain release factor 1 directs the termination of translation in response to the peptide chain termination codons UAG and UAA. This is Peptide chain release factor 1 from Campylobacter jejuni subsp. jejuni serotype O:6 (strain 81116 / NCTC 11828).